Here is a 990-residue protein sequence, read N- to C-terminus: Putative ariadne-like RING finger protein R811 (990 aa).

The VWFA domain occupies 8–201 (DLAIVVDATG…IITQTTIKLL (194 aa)). The interval 797-990 (EKGLCMICFN…GGAFEYDQDD (194 aa)) is TRIAD supradomain. Zn(2+) contacts are provided by Cys-801, Cys-804, Cys-827, and Cys-830. The segment at 801 to 854 (CMICFNEFSKSNLRQICGRKVCQSVACYDCMKSWYGENKVGDLIHVNALTCPFC) adopts an RING-type 1 zinc-finger fold. Residues 855 to 903 (KQCPMFNILAAFNRQVCAMVRTNNSFDIDWWYGWCLKCFQPKKVVEKEC) form an IBR-type zinc finger. Zn(2+)-binding residues include Cys-930 and Cys-935. An RING-type 2; atypical zinc finger spans residues 930 to 961 (CPNSLCKIPIIKDGGCNHMECTACKKHFCWLC). The active site involves Cys-945. Zn(2+)-binding residues include Cys-950 and Cys-953.

This chain is Putative ariadne-like RING finger protein R811, found in Acanthamoeba polyphaga (Amoeba).